The following is a 258-amino-acid chain: Cholera enterotoxin subunit A (258 aa).

The N-terminal stretch at 1–18 (MVKIIFVFFIFLSSFSYA) is a signal peptide. NAD(+) contacts are provided by residues 25–28 (RADS) and 41–43 (MPR). E130 is an active-site residue. A disulfide bond links C205 and C217.

The protein belongs to the enterotoxin A family. The holotoxin (choleragen) consists of a pentameric ring of B subunits whose central pore is occupied by the A subunit. The A subunit contains two chains, A1 and A2, linked by a disulfide bridge. Interaction with the host protein ARF6 causes a conformation change so that the enterotoxin subunit A1 can bind NAD and catalyze the ADP-ribosylation of the host Gs alpha.

In terms of biological role, the A1 chain catalyzes the ADP-ribosylation of Gs alpha, a GTP-binding regulatory protein, to activate the adenylate cyclase. This leads to an overproduction of cAMP and eventually to a hypersecretion of chloride and bicarbonate followed by water, resulting in the characteristic cholera stool. The A2 chain tethers A1 to the pentameric ring. The polypeptide is Cholera enterotoxin subunit A (ctxA) (Vibrio cholerae serotype O1 (strain ATCC 39315 / El Tor Inaba N16961)).